Reading from the N-terminus, the 252-residue chain is 2-succinyl-6-hydroxy-2,4-cyclohexadiene-1-carboxylate synthase (252 aa).

Belongs to the AB hydrolase superfamily. MenH family. In terms of assembly, monomer.

The catalysed reaction is 5-enolpyruvoyl-6-hydroxy-2-succinyl-cyclohex-3-ene-1-carboxylate = (1R,6R)-6-hydroxy-2-succinyl-cyclohexa-2,4-diene-1-carboxylate + pyruvate. The protein operates within quinol/quinone metabolism; 1,4-dihydroxy-2-naphthoate biosynthesis; 1,4-dihydroxy-2-naphthoate from chorismate: step 3/7. Its pathway is quinol/quinone metabolism; menaquinone biosynthesis. Catalyzes a proton abstraction reaction that results in 2,5-elimination of pyruvate from 2-succinyl-5-enolpyruvyl-6-hydroxy-3-cyclohexene-1-carboxylate (SEPHCHC) and the formation of 2-succinyl-6-hydroxy-2,4-cyclohexadiene-1-carboxylate (SHCHC). This chain is 2-succinyl-6-hydroxy-2,4-cyclohexadiene-1-carboxylate synthase, found in Salmonella heidelberg (strain SL476).